The chain runs to 449 residues: Glucose-6-phosphate isomerase (449 aa).

The active-site Proton donor is Glu-291. Catalysis depends on residues His-312 and Lys-426.

It belongs to the GPI family.

It is found in the cytoplasm. The catalysed reaction is alpha-D-glucose 6-phosphate = beta-D-fructose 6-phosphate. It participates in carbohydrate biosynthesis; gluconeogenesis. It functions in the pathway carbohydrate degradation; glycolysis; D-glyceraldehyde 3-phosphate and glycerone phosphate from D-glucose: step 2/4. Catalyzes the reversible isomerization of glucose-6-phosphate to fructose-6-phosphate. The sequence is that of Glucose-6-phosphate isomerase from Streptococcus pneumoniae (strain CGSP14).